We begin with the raw amino-acid sequence, 337 residues long: P2Y purinoceptor 14 (337 aa).

At 1-28 (MNATSVPPAEGSCPSNALITKQIIPMLY) the chain is on the extracellular side. Asn2 carries an N-linked (GlcNAc...) asparagine glycan. A helical transmembrane segment spans residues 29 to 49 (FVVFVAGILLNGMSGWVFFYV). Residues 50–54 (PSSKS) lie on the Cytoplasmic side of the membrane. A helical membrane pass occupies residues 55 to 75 (FIVYLKNIVIADFLMSLTFPF). Residues 76-95 (KILGDLGLGLWQVKVFVCRV) are Extracellular-facing. An intrachain disulfide couples Cys93 to Cys171. A helical transmembrane segment spans residues 96–116 (SAVLFYINMYVSIVFFGLIGF). Over 117–138 (DRYYKIVKPLLTSFIQSISYSK) the chain is Cytoplasmic. A helical transmembrane segment spans residues 139–159 (LLSVLVWSLTLLIALPNMILT). The Extracellular portion of the chain corresponds to 160-187 (NRNVTEATRVKCMDLKSDLGLKWHKASS). N-linked (GlcNAc...) asparagine glycosylation is present at Asn162. Residues 188–208 (YIFVGIFWIVFLSLIIFYTAI) form a helical membrane-spanning segment. Residues 209–233 (TKKIFKSHFKSRKNSVSVKKKSSRN) are Cytoplasmic-facing. A helical transmembrane segment spans residues 234-254 (IFSIMFVFFICFVPYHIARIP). At 255–277 (YTQSQTEAHYSCQSKQILFYVKE) the chain is on the extracellular side. Residues 278-298 (FSLLLSAANVCLDPIIYFFLC) traverse the membrane as a helical segment. The Cytoplasmic segment spans residues 299-337 (QPFREVLCKKLHIQLKTQHDSETSKIKRENIIQESTDTL).

It belongs to the G-protein coupled receptor 1 family.

It localises to the cell membrane. Functionally, receptor for UDP-glucose and other UDP-sugar coupled to G-proteins. Not activated by ATP, ADP, UTP or ATP. The sequence is that of P2Y purinoceptor 14 (P2RY14) from Bos taurus (Bovine).